We begin with the raw amino-acid sequence, 244 residues long: Acidic leucine-rich nuclear phosphoprotein 32 family member A (244 aa).

LRR repeat units lie at residues D18 to F41, G43 to N64, K65 to C87, and N89 to K110. One can recognise an LRRCT domain in the interval C123–E161. The segment at Y148–D244 is disordered. A compositionally biased stretch (acidic residues) spans D157 to E227.

Belongs to the ANP32 family. In terms of processing, phosphorylated on serine residues.

The protein localises to the nucleus. It localises to the cytoplasm. The protein resides in the endoplasmic reticulum. Functionally, implicated in a number of cellular processes, including proliferation, differentiation, caspase-dependent and caspase-independent apoptosis, suppression of transformation (tumor suppressor), inhibition of protein phosphatase 2A, regulation of mRNA trafficking and stability, and inhibition of acetyltransferases as part of the INHAT (inhibitor of histone acetyltransferases) complex. The sequence is that of Acidic leucine-rich nuclear phosphoprotein 32 family member A (anp32a) from Xenopus laevis (African clawed frog).